The primary structure comprises 635 residues: Threonine--tRNA ligase (635 aa).

The region spanning 1-62 (MITITLPDGS…EHDAILRIIT (62 aa)) is the TGS domain. The tract at residues 244–535 (DHRKIGKAQD…LIEHYAGIWP (292 aa)) is catalytic. 3 residues coordinate Zn(2+): cysteine 335, histidine 386, and histidine 512.

This sequence belongs to the class-II aminoacyl-tRNA synthetase family. As to quaternary structure, homodimer. Zn(2+) serves as cofactor.

Its subcellular location is the cytoplasm. It catalyses the reaction tRNA(Thr) + L-threonine + ATP = L-threonyl-tRNA(Thr) + AMP + diphosphate + H(+). Its function is as follows. Catalyzes the attachment of threonine to tRNA(Thr) in a two-step reaction: L-threonine is first activated by ATP to form Thr-AMP and then transferred to the acceptor end of tRNA(Thr). Also edits incorrectly charged L-seryl-tRNA(Thr). The polypeptide is Threonine--tRNA ligase (Xylella fastidiosa (strain M12)).